Here is a 132-residue protein sequence, read N- to C-terminus: Large ribosomal subunit protein bL12 (132 aa).

The disordered stretch occupies residues 112 to 132 (KEAADKAKTQLEGAGGTINLK).

The protein belongs to the bacterial ribosomal protein bL12 family. In terms of assembly, homodimer. Part of the ribosomal stalk of the 50S ribosomal subunit. Forms a multimeric L10(L12)X complex, where L10 forms an elongated spine to which 2 to 4 L12 dimers bind in a sequential fashion. Binds GTP-bound translation factors.

In terms of biological role, forms part of the ribosomal stalk which helps the ribosome interact with GTP-bound translation factors. Is thus essential for accurate translation. This Leifsonia xyli subsp. xyli (strain CTCB07) protein is Large ribosomal subunit protein bL12.